We begin with the raw amino-acid sequence, 89 residues long: Histone H3.v2 (89 aa).

It belongs to the histone H3 family.

The polypeptide is Histone H3.v2 (H3v2) (Dictyostelium discoideum (Social amoeba)).